The sequence spans 289 residues: Shikimate dehydrogenase (NADP(+)) (289 aa).

Shikimate-binding positions include 22-24 and Thr69; that span reads SRS. Lys73 functions as the Proton acceptor in the catalytic mechanism. Residue Glu85 coordinates NADP(+). Residues Asn94 and Asp109 each coordinate shikimate. NADP(+) is bound by residues 134–138, 158–163, and Ile226; these read GAGGA and NRTLSR. Tyr228 contributes to the shikimate binding site. Gly249 lines the NADP(+) pocket.

This sequence belongs to the shikimate dehydrogenase family. Homodimer.

The enzyme catalyses shikimate + NADP(+) = 3-dehydroshikimate + NADPH + H(+). It participates in metabolic intermediate biosynthesis; chorismate biosynthesis; chorismate from D-erythrose 4-phosphate and phosphoenolpyruvate: step 4/7. Involved in the biosynthesis of the chorismate, which leads to the biosynthesis of aromatic amino acids. Catalyzes the reversible NADPH linked reduction of 3-dehydroshikimate (DHSA) to yield shikimate (SA). The sequence is that of Shikimate dehydrogenase (NADP(+)) from Brucella canis (strain ATCC 23365 / NCTC 10854 / RM-666).